The chain runs to 660 residues: DNA mismatch repair protein MutL (660 aa).

A disordered region spans residues 414–433 (SSVKHASRPQNTFTETDHPN).

Belongs to the DNA mismatch repair MutL/HexB family.

Its function is as follows. This protein is involved in the repair of mismatches in DNA. It is required for dam-dependent methyl-directed DNA mismatch repair. May act as a 'molecular matchmaker', a protein that promotes the formation of a stable complex between two or more DNA-binding proteins in an ATP-dependent manner without itself being part of a final effector complex. This Streptococcus pyogenes serotype M6 (strain ATCC BAA-946 / MGAS10394) protein is DNA mismatch repair protein MutL.